Consider the following 166-residue polypeptide: Large ribosomal subunit protein mL41 (166 aa).

A mitochondrion-targeting transit peptide spans 1–26 (MNNCIKVVPIALRCQQRTISTSSVLE). A disordered region spans residues 136-166 (KDGSAKEPSVNEQLTPEEALQRARKTGSDIF).

It belongs to the mitochondrion-specific ribosomal protein mL41 family. As to quaternary structure, component of the mitochondrial ribosome large subunit (39S) which comprises a 16S rRNA and about 50 distinct proteins.

Its subcellular location is the mitochondrion. The protein is Large ribosomal subunit protein mL41 (mRpL41) of Drosophila melanogaster (Fruit fly).